Here is a 224-residue protein sequence, read N- to C-terminus: Virulence transcriptional regulatory protein PhoP (224 aa).

One can recognise a Response regulatory domain in the interval 3–117 (RVLVVEDNAL…EVMARMQALM (115 aa)). A 4-aspartylphosphate modification is found at Asp52. Positions 125–223 (SQVINISPFQ…VRGQGYLFEL (99 aa)) form a DNA-binding region, ompR/PhoB-type.

Post-translationally, phosphorylated by PhoQ.

The protein localises to the cytoplasm. Its function is as follows. Member of the two-component regulatory system PhoQ/PhoP which regulates the expression of genes involved in virulence and resistance to host defense antimicrobial peptides. Promotes intramacrophage survival of S.typhi. Is required to enhance bacterial resistance to bile in the human intestinal cells. The chain is Virulence transcriptional regulatory protein PhoP (phoP) from Salmonella typhi.